Reading from the N-terminus, the 85-residue chain is Putative membrane protein insertion efficiency factor (85 aa).

It belongs to the UPF0161 family.

Its subcellular location is the cell inner membrane. Could be involved in insertion of integral membrane proteins into the membrane. This Sodalis glossinidius (strain morsitans) protein is Putative membrane protein insertion efficiency factor.